Reading from the N-terminus, the 250-residue chain is Ino eighty subunit 3 (250 aa).

Residues 29–70 (PDFLEKDPHHKKFHNADGLNQQGSSTPSTATDANAASTASTH) form a disordered region. Low complexity predominate over residues 52–70 (SSTPSTATDANAASTASTH). A phosphoserine mark is found at serine 157 and serine 211.

In terms of assembly, component of the chromatin-remodeling INO80 complex, at least composed of ARP4, ARP5, ARP8, RVB1, RVB2, TAF14, NHP10, IES1, IES3, IES4, IES6, ACT1, IES2, IES5 and INO80.

Its subcellular location is the nucleus. In terms of biological role, probably involved in transcription regulation via its interaction with the INO80 complex, a chromatin-remodeling complex. This chain is Ino eighty subunit 3 (IES3), found in Saccharomyces cerevisiae (strain ATCC 204508 / S288c) (Baker's yeast).